The sequence spans 301 residues: Probable aspartoacylase (301 aa).

2 residues coordinate Zn(2+): H13 and E16. Substrate-binding positions include R54 and 61–62 (NR). Position 105 (H105) interacts with Zn(2+). Residues E163 and Y273 each contribute to the substrate site.

It belongs to the AspA/AstE family. Aspartoacylase subfamily. It depends on Zn(2+) as a cofactor.

The catalysed reaction is an N-acyl-L-aspartate + H2O = a carboxylate + L-aspartate. This Prochlorococcus marinus (strain AS9601) protein is Probable aspartoacylase.